Consider the following 267-residue polypeptide: Enolase-phosphatase E1 (267 aa).

Mg(2+)-binding residues include Asp11 and Glu13. Substrate contacts are provided by residues 155 to 156 (SS) and Lys189. Position 215 (Asp215) interacts with Mg(2+).

The protein belongs to the HAD-like hydrolase superfamily. MasA/MtnC family. In terms of assembly, monomer. The cofactor is Mg(2+).

The protein localises to the cytoplasm. It localises to the nucleus. The catalysed reaction is 5-methylsulfanyl-2,3-dioxopentyl phosphate + H2O = 1,2-dihydroxy-5-(methylsulfanyl)pent-1-en-3-one + phosphate. It participates in amino-acid biosynthesis; L-methionine biosynthesis via salvage pathway; L-methionine from S-methyl-5-thio-alpha-D-ribose 1-phosphate: step 3/6. It functions in the pathway amino-acid biosynthesis; L-methionine biosynthesis via salvage pathway; L-methionine from S-methyl-5-thio-alpha-D-ribose 1-phosphate: step 4/6. Its function is as follows. Bifunctional enzyme that catalyzes the enolization of 2,3-diketo-5-methylthiopentyl-1-phosphate (DK-MTP-1-P) into the intermediate 2-hydroxy-3-keto-5-methylthiopentenyl-1-phosphate (HK-MTPenyl-1-P), which is then dephosphorylated to form the acireductone 1,2-dihydroxy-3-keto-5-methylthiopentene (DHK-MTPene). The polypeptide is Enolase-phosphatase E1 (enoph1) (Dictyostelium discoideum (Social amoeba)).